A 417-amino-acid chain; its full sequence is Cobalamin binding intrinsic factor (417 aa).

An N-terminal signal peptide occupies residues methionine 1 to threonine 18. Intrachain disulfides connect cysteine 26–cysteine 246, cysteine 103–cysteine 288, and cysteine 143–cysteine 182. Position 171 (aspartate 171) interacts with cob(II)alamin. Residue serine 191 is modified to Phosphoserine. A glycan (N-linked (GlcNAc...) asparagine) is linked at asparagine 209. Cob(II)alamin is bound by residues aspartate 222 and glutamine 270. N-linked (GlcNAc...) asparagine glycans are attached at residues asparagine 311 and asparagine 330. Cob(II)alamin contacts are provided by residues serine 365–valine 370 and tryptophan 386–leucine 395. Asparagine 413 carries an N-linked (GlcNAc...) asparagine glycan.

Belongs to the eukaryotic cobalamin transport proteins family. Interacts with CUBN (via CUB domains). In terms of processing, the N-terminus is blocked. Gastric mucosa.

It localises to the secreted. Its function is as follows. Promotes absorption of the essential vitamin cobalamin (Cbl) in the ileum. After interaction with CUBN, the CBLIF-cobalamin complex is internalized via receptor-mediated endocytosis. This chain is Cobalamin binding intrinsic factor, found in Rattus norvegicus (Rat).